The following is a 631-amino-acid chain: Probable potassium transport system protein Kup (631 aa).

Transmembrane regions (helical) follow at residues 17-37 (IGLLIAAVGVVYGDIGTSPLY), 56-76 (ILGVLSLIFWSLIWVVSFKYM), 109-129 (MMMVVFGLFGAALFYGDSMIT), 147-167 (GLDHWIVPMALIVLVGLFLIQ), 174-194 (IGVLFGPVMVTWFLVLGALGV), 215-235 (FFIIHPGIGVAILGAVVLALT), 256-276 (WFILVLPALLLNYFGQGALVL), 288-308 (LLAPGWALLPLIGLSTMATII), 346-366 (IYIGAVNWALMAGVILLVIGF), 378-398 (VAVTGTMLCTTILVSTVMLML), 403-423 (PLLAVPLLICLLLVDGLFFAA), and 428-448 (IFQGGAFPVLAGAVLFILMTT).

It belongs to the HAK/KUP transporter (TC 2.A.72) family.

Its subcellular location is the cell inner membrane. It catalyses the reaction K(+)(in) + H(+)(in) = K(+)(out) + H(+)(out). Functionally, transport of potassium into the cell. Likely operates as a K(+):H(+) symporter. This is Probable potassium transport system protein Kup from Pseudomonas savastanoi pv. phaseolicola (strain 1448A / Race 6) (Pseudomonas syringae pv. phaseolicola (strain 1448A / Race 6)).